The sequence spans 201 residues: Pectinesterase inhibitor 7 (201 aa).

The N-terminal stretch at 1–24 (MARNFELSLILFVLYLSTAAIVMA) is a signal peptide. 2 cysteine pairs are disulfide-bonded: Cys-42/Cys-51 and Cys-108/Cys-159.

It belongs to the PMEI family. Binds reversibly to PME3 to inhibit its activity; the stability of the PME3-PMEI7 complex and the inhibition of the pectin methylesterase (PME) activity is pH-dependent, based on protonation status of amino-acids at the complex interface. In terms of tissue distribution, accumulates in etiolated hypocotyls (at protein level).

It is found in the secreted. The protein resides in the extracellular space. It localises to the apoplast. Its subcellular location is the cell wall. Its function is as follows. Pectin methylesterase (PME) inhibitor that can target PME3 in a pH-dependent manner, mainly in slightly acidic conditions (pH 6.0 and 5.0) but not at pH 7.0; this processus relies on changes in the protonation of amino acids involved in intermolecular and intramolecular interactions. Regulates homogalacturonan methylesterification during plant development. This Arabidopsis thaliana (Mouse-ear cress) protein is Pectinesterase inhibitor 7.